The chain runs to 418 residues: Caveolae-associated protein 2 (418 aa).

Positions 1 to 42 (MGEDAAQAEKFQHPNTDMLQEKPSSPSPMPSSTPSPSLNLGS) are disordered. Glycine 2 carries the N-acetylglycine modification. The interval 2–168 (GEDAAQAEKF…IFQEESEIPA (167 aa)) is interaction with CAVIN1. Serine 27, serine 35, serine 37, and serine 51 each carry phosphoserine. 2 coiled-coil regions span residues 61–87 (LLDK…INLE) and 126–268 (RAVR…VERR). Positions 62 to 100 (LDKLVNMLDAVRENQHNMEQRQINLEGSVKGIQNDLTKL) are leucine-zipper. At threonine 196 the chain carries Phosphothreonine. 2 disordered regions span residues 200–238 (VDLS…SLKK) and 262–382 (IVSV…ALQQ). Phosphoserine is present on residues serine 203, serine 204, and serine 218. Positions 203-219 (SSDDELPRDEEALEDSA) are enriched in acidic residues. Residues 220–238 (EEKMEESRAEKIKRSSLKK) are compositionally biased toward basic and acidic residues. A compositionally biased stretch (polar residues) spans 275–287 (LTPNHQKASSGKS). Phosphoserine is present on residues serine 283, serine 284, serine 287, serine 288, serine 293, and serine 296. Over residues 303-321 (REGESSVENETKLEDQMQE) the composition is skewed to basic and acidic residues. Serine 327, serine 336, serine 359, and serine 363 each carry phosphoserine. The span at 355-366 (RGNNSAVGSNAD) shows a compositional bias: polar residues. At threonine 368 the chain carries Phosphothreonine. Residues 368–377 (TIEEDEEEEP) are compositionally biased toward acidic residues. Phosphotyrosine is present on tyrosine 388. 2 positions are modified to phosphoserine: serine 390 and serine 396. Residues 396 to 418 (SEEMEEPSEKQVQPAVLHVDQTA) form a disordered region.

The protein belongs to the CAVIN family. In terms of assembly, component of the CAVIN complex composed of CAVIN1, CAVIN2, CAVIN3 and CAVIN4. Binds to PRKCA in the presence of phosphatidylserine. Interacts with CAVIN4; this augments the transactivation of NPPA by CAVIN4. Interacts with CAVIN1. Interacts with CAV3. In terms of processing, the N-terminus is blocked. As to expression, heart, adipose tissue, lung and endothelial cells (at protein level). Highly expressed in kidney and expressed at lower levels in liver, spleen, thymus, stomach, intestine and uterus.

The protein localises to the cytoplasm. It localises to the cytosol. The protein resides in the membrane. Its subcellular location is the caveola. Its function is as follows. Plays an important role in caveolar biogenesis and morphology. Regulates caveolae morphology by inducing membrane curvature within caveolae. Plays a role in caveola formation in a tissue-specific manner. Required for the formation of caveolae in the lung and fat endothelia but not in the heart endothelia. Negatively regulates the size or stability of CAVIN complexes in the lung endothelial cells. May play a role in targeting PRKCA to caveolae. The sequence is that of Caveolae-associated protein 2 (Cavin2) from Mus musculus (Mouse).